Reading from the N-terminus, the 353-residue chain is uncharacterized protein (353 aa).

This is an uncharacterized protein from Archaeoglobus fulgidus (strain ATCC 49558 / DSM 4304 / JCM 9628 / NBRC 100126 / VC-16).